Consider the following 474-residue polypeptide: tRNA-2-methylthio-N(6)-dimethylallyladenosine synthase (474 aa).

Residues 3–120 (KKLHIKTWGC…LPEMINSVRG (118 aa)) form the MTTase N-terminal domain. [4Fe-4S] cluster contacts are provided by Cys12, Cys49, Cys83, Cys157, Cys161, and Cys164. The Radical SAM core domain occupies 143-375 (RAEGPTAFVS…QERINQQAMA (233 aa)). Positions 378-441 (RRMLGTVQRI…TNSLRGKVVR (64 aa)) constitute a TRAM domain.

The protein belongs to the methylthiotransferase family. MiaB subfamily. In terms of assembly, monomer. The cofactor is [4Fe-4S] cluster.

The protein localises to the cytoplasm. The enzyme catalyses N(6)-dimethylallyladenosine(37) in tRNA + (sulfur carrier)-SH + AH2 + 2 S-adenosyl-L-methionine = 2-methylsulfanyl-N(6)-dimethylallyladenosine(37) in tRNA + (sulfur carrier)-H + 5'-deoxyadenosine + L-methionine + A + S-adenosyl-L-homocysteine + 2 H(+). Its function is as follows. Catalyzes the methylthiolation of N6-(dimethylallyl)adenosine (i(6)A), leading to the formation of 2-methylthio-N6-(dimethylallyl)adenosine (ms(2)i(6)A) at position 37 in tRNAs that read codons beginning with uridine. The chain is tRNA-2-methylthio-N(6)-dimethylallyladenosine synthase from Citrobacter koseri (strain ATCC BAA-895 / CDC 4225-83 / SGSC4696).